The sequence spans 436 residues: uncharacterized protein (436 aa).

This is an uncharacterized protein from Diadromus pulchellus (Parasitic wasp).